The sequence spans 645 residues: 1,4-alpha-glucan branching enzyme GlgB (645 aa).

Aspartate 309 functions as the Nucleophile in the catalytic mechanism. Glutamate 352 acts as the Proton donor in catalysis. The interval valine 619–arginine 645 is disordered. The segment covering arginine 636–arginine 645 has biased composition (polar residues).

This sequence belongs to the glycosyl hydrolase 13 family. GlgB subfamily. Monomer.

It catalyses the reaction Transfers a segment of a (1-&gt;4)-alpha-D-glucan chain to a primary hydroxy group in a similar glucan chain.. It participates in glycan biosynthesis; glycogen biosynthesis. Catalyzes the formation of the alpha-1,6-glucosidic linkages in glycogen by scission of a 1,4-alpha-linked oligosaccharide from growing alpha-1,4-glucan chains and the subsequent attachment of the oligosaccharide to the alpha-1,6 position. This is 1,4-alpha-glucan branching enzyme GlgB from Bacillus mycoides (strain KBAB4) (Bacillus weihenstephanensis).